Reading from the N-terminus, the 264-residue chain is Putative hydroxypyruvate isomerase (264 aa).

Catalysis depends on proton donor/acceptor residues Glu-145 and Glu-243.

Belongs to the hyi family.

It carries out the reaction 3-hydroxypyruvate = 2-hydroxy-3-oxopropanoate. Its function is as follows. Catalyzes the reversible isomerization between hydroxypyruvate and 2-hydroxy-3-oxopropanoate (also termed tartronate semialdehyde). The protein is Putative hydroxypyruvate isomerase (Gip) of Drosophila melanogaster (Fruit fly).